The primary structure comprises 461 residues: Porin AaxA (461 aa).

A signal peptide spans 1–22 (MSFRSILLTALLSLSFTNTMQA).

This sequence belongs to the OprB family.

The protein resides in the cell outer membrane. In terms of biological role, facilitates L-arginine uptake, as part of the AaxABC system. The arginine uptake by the bacterium in the macrophage may be a virulence factor against the host innate immune response. This chain is Porin AaxA (aaxA), found in Chlamydia muridarum (strain MoPn / Nigg).